We begin with the raw amino-acid sequence, 92 residues long: MGLKEEFEEHAEKVNTLTELPSNEDLLILYGLYKQAKFGPVDTSRPGMFSMKERAKWDAWKAVEGKSSEEAMNDYITKVKQLLEVAASKAST.

The ACB domain maps to 3-88; sequence LKEEFEEHAE…VKQLLEVAAS (86 aa). An acyl-CoA-binding positions include 30-34, K52, K56, and Y75; that span reads YGLYK.

The protein belongs to the ACBP family. Interacts with PDLP8. As to expression, mostly expressed in seeds, stems, and siliques, and, to a lower extent, in leaves, flowers, and roots (at protein level). Highly expressed in root and shoot phloem companion cells.

It is found in the cytoplasm. The protein resides in the cell membrane. Binds medium- and long-chain acyl-CoA esters with very high affinity. May function as an intracellular carrier of acyl-CoA esters. Confers resistance to cold and freezing. Interacts with phosphatidylcholine and derivatives, but not phosphatidic acid and lysophosphatidylcholine. May be involved in phospholipid metabolism. This Arabidopsis thaliana (Mouse-ear cress) protein is Acyl-CoA-binding domain-containing protein 6 (ACBP6).